Reading from the N-terminus, the 158-residue chain is Transcription elongation factor GreA (158 aa).

The protein belongs to the GreA/GreB family.

Its function is as follows. Necessary for efficient RNA polymerase transcription elongation past template-encoded arresting sites. The arresting sites in DNA have the property of trapping a certain fraction of elongating RNA polymerases that pass through, resulting in locked ternary complexes. Cleavage of the nascent transcript by cleavage factors such as GreA or GreB allows the resumption of elongation from the new 3'terminus. GreA releases sequences of 2 to 3 nucleotides. This is Transcription elongation factor GreA from Pseudomonas syringae pv. tomato (strain ATCC BAA-871 / DC3000).